The following is a 621-amino-acid chain: Proton pump-interactor BIP131 (621 aa).

The stretch at 250–305 (IDEVKRDRQAVRDKIKVLEDQIHAVDGEIAALQDDLTAATARKDKAFEALNELRKT) forms a coiled coil. Positions 374 to 387 (SRDGRMRNPDEKPI) are enriched in basic and acidic residues. Residues 374–572 (SRDGRMRNPD…RSTVTKTKTP (199 aa)) are disordered. Residues 430-441 (KAPAKAAKAKQP) show a composition bias toward low complexity. Residues 448-516 (PDVHDDEPPK…AEKKLKEKEK (69 aa)) are compositionally biased toward basic and acidic residues. Positions 466–524 (EAKLKEMKRQEEIEKNKLALERKKKQAEKQAMKAAARAEKEAEKKLKEKEKKARKRSAT) form a coiled coil. A helical membrane pass occupies residues 589-609 (WGAPMAALAAALVALLGALVY).

Belongs to the plant proton pump-interactor protein family. In terms of assembly, interacts with BRI1.

Its subcellular location is the cell membrane. Functionally, may regulate plasma membrane ATPase activity. The sequence is that of Proton pump-interactor BIP131 from Oryza sativa subsp. japonica (Rice).